A 390-amino-acid chain; its full sequence is NADH-quinone oxidoreductase subunit D (390 aa).

Belongs to the complex I 49 kDa subunit family. In terms of assembly, NDH-1 is composed of 14 different subunits. Subunits NuoB, C, D, E, F, and G constitute the peripheral sector of the complex.

It is found in the cell inner membrane. The catalysed reaction is a quinone + NADH + 5 H(+)(in) = a quinol + NAD(+) + 4 H(+)(out). Functionally, NDH-1 shuttles electrons from NADH, via FMN and iron-sulfur (Fe-S) centers, to quinones in the respiratory chain. The immediate electron acceptor for the enzyme in this species is believed to be ubiquinone. Couples the redox reaction to proton translocation (for every two electrons transferred, four hydrogen ions are translocated across the cytoplasmic membrane), and thus conserves the redox energy in a proton gradient. This chain is NADH-quinone oxidoreductase subunit D, found in Geobacter metallireducens (strain ATCC 53774 / DSM 7210 / GS-15).